We begin with the raw amino-acid sequence, 182 residues long: Acireductone dioxygenase (182 aa).

4 residues coordinate Fe(2+): His100, His102, Glu106, and His145. Ni(2+) is bound by residues His100, His102, Glu106, and His145.

Belongs to the acireductone dioxygenase (ARD) family. In terms of assembly, monomer. Fe(2+) is required as a cofactor. Requires Ni(2+) as cofactor.

It catalyses the reaction 1,2-dihydroxy-5-(methylsulfanyl)pent-1-en-3-one + O2 = 3-(methylsulfanyl)propanoate + CO + formate + 2 H(+). It carries out the reaction 1,2-dihydroxy-5-(methylsulfanyl)pent-1-en-3-one + O2 = 4-methylsulfanyl-2-oxobutanoate + formate + 2 H(+). The protein operates within amino-acid biosynthesis; L-methionine biosynthesis via salvage pathway; L-methionine from S-methyl-5-thio-alpha-D-ribose 1-phosphate: step 5/6. In terms of biological role, catalyzes 2 different reactions between oxygen and the acireductone 1,2-dihydroxy-3-keto-5-methylthiopentene (DHK-MTPene) depending upon the metal bound in the active site. Fe-containing acireductone dioxygenase (Fe-ARD) produces formate and 2-keto-4-methylthiobutyrate (KMTB), the alpha-ketoacid precursor of methionine in the methionine recycle pathway. Ni-containing acireductone dioxygenase (Ni-ARD) produces methylthiopropionate, carbon monoxide and formate, and does not lie on the methionine recycle pathway. This is Acireductone dioxygenase from Nostoc sp. (strain PCC 7120 / SAG 25.82 / UTEX 2576).